A 171-amino-acid polypeptide reads, in one-letter code: Ferritin heavy chain (171 aa).

Position 1 is an N-acetylmethionine (M1). Residue T2 is modified to N-acetylthreonine; in Ferritin heavy chain, N-terminally processed. The Ferritin-like diiron domain maps to 11 to 160 (QNYHQDSEAA…DHITNLRKMG (150 aa)). Residues E28, E63, H66, E108, and Q142 each coordinate Fe cation.

The protein belongs to the ferritin family. In terms of assembly, oligomer of 24 subunits. There are two types of subunits: L (light) chain and H (heavy) chain. The major chain can be light or heavy, depending on the species and tissue type. The functional molecule forms a roughly spherical shell with a diameter of 12 nm and contains a central cavity into which the insoluble mineral iron core is deposited. Interacts with NCOA4; NCOA4 promotes targeting of the iron-binding ferritin complex to autolysosomes following starvation or iron depletion.

It is found in the cytoplasm. The protein localises to the lysosome. Its subcellular location is the cytoplasmic vesicle. It localises to the autophagosome. It carries out the reaction 4 Fe(2+) + O2 + 4 H(+) = 4 Fe(3+) + 2 H2O. Functionally, stores iron in a soluble, non-toxic, readily available form. Important for iron homeostasis. Has ferroxidase activity. Iron is taken up in the ferrous form and deposited as ferric hydroxides after oxidation. Also plays a role in delivery of iron to cells. Mediates iron uptake in capsule cells of the developing kidney. Delivery to lysosomes is mediated by the cargo receptor NCOA4 for autophagic degradation and release of iron. The sequence is that of Ferritin heavy chain (FTH1) from Ovis aries (Sheep).